Here is a 71-residue protein sequence, read N- to C-terminus: Conotoxin Bu24 (71 aa).

An N-terminal signal peptide occupies residues 1–21 (MGMRMMVTVFLLVVLATTVVS). Residues 22-44 (LRSNRASDGRRGIVNKLNDLVPK) constitute a propeptide that is removed on maturation. N70 carries the post-translational modification Asparagine amide.

Belongs to the conotoxin A superfamily. In terms of processing, contains 3 disulfide bonds. They are not indicated here, since framework IV presents two different connectivities (I-V, II-III, IV-VI and I-III, II-V, IV-VI). As to expression, expressed by the venom duct.

It localises to the secreted. In Conus bullatus (Bubble cone), this protein is Conotoxin Bu24.